A 558-amino-acid chain; its full sequence is Formate--tetrahydrofolate ligase (558 aa).

66 to 73 (TPAGEGKT) serves as a coordination point for ATP.

Belongs to the formate--tetrahydrofolate ligase family.

The enzyme catalyses (6S)-5,6,7,8-tetrahydrofolate + formate + ATP = (6R)-10-formyltetrahydrofolate + ADP + phosphate. It functions in the pathway one-carbon metabolism; tetrahydrofolate interconversion. In Neisseria meningitidis serogroup C / serotype 2a (strain ATCC 700532 / DSM 15464 / FAM18), this protein is Formate--tetrahydrofolate ligase.